The following is a 277-amino-acid chain: MAITAQDINKLRQLTGAGMMDCKKALTEAQGDIDKAIELLRKKGQKIAAARAGRDTTEGFALADVNASADHGAIIALGCETDFVAKNDLFQQIAQQILSLALAQQPATIEDLKQLEIDGLTVQERITELVGKMGENITLSAYETLSAEVVVPYIHTGNKLAVLVALQGAKGEDVVVAGKDVAMQIAALNPIAIDKDGVFTSVIEQELAIAREQAIREGKPEAMLENIAQGRLNKFFKENTLANQPFVKDNTLTVAQYLTKIAAGLVVKNFKRVLVGA.

Residues 81–84 (TDFV) are involved in Mg(2+) ion dislocation from EF-Tu.

The protein belongs to the EF-Ts family.

It localises to the cytoplasm. In terms of biological role, associates with the EF-Tu.GDP complex and induces the exchange of GDP to GTP. It remains bound to the aminoacyl-tRNA.EF-Tu.GTP complex up to the GTP hydrolysis stage on the ribosome. The protein is Elongation factor Ts of Amoebophilus asiaticus (strain 5a2).